The primary structure comprises 1097 residues: Transmembrane protein 132D (1097 aa).

The first 30 residues, 1-30 (MCPSEMGTLWYLWSPVLISLAALFSKVTEG), serve as a signal peptide directing secretion. The Extracellular segment spans residues 31–913 (RGILESIQRF…LDQAAKGLSD (883 aa)). A compositionally biased stretch (basic and acidic residues) spans 233 to 245 (DERGDCAKEDSRK). The interval 233 to 263 (DERGDCAKEDSRKSGGTPAGHNDVDESSPPL) is disordered. The helical transmembrane segment at 914-934 (LEIGMYALLGVFCLAILVFLI) threads the bilayer. At 935-1097 (NCVTFALKYR…SCMERLHEHV (163 aa)) the chain is on the cytoplasmic side. A disordered region spans residues 1021–1042 (MLTDDQEQKSEPPTSPTSKRKR).

Belongs to the TMEM132 family. In terms of tissue distribution, expressed in mature oligodendrocytes in the white and gray matter of the brain.

The protein localises to the membrane. Regulates neuronal morphology via inhibition of the WAVE regulatory complex (WCR), a complex that controls F-actin cytoskeletal dynamics. The protein is Transmembrane protein 132D (Tmem132d) of Mus musculus (Mouse).